The following is a 244-amino-acid chain: tRNA (guanine-N(1)-)-methyltransferase (244 aa).

S-adenosyl-L-methionine is bound by residues glycine 120 and 140–145 (IGDYIL).

Belongs to the RNA methyltransferase TrmD family. In terms of assembly, homodimer.

The protein resides in the cytoplasm. The enzyme catalyses guanosine(37) in tRNA + S-adenosyl-L-methionine = N(1)-methylguanosine(37) in tRNA + S-adenosyl-L-homocysteine + H(+). In terms of biological role, specifically methylates guanosine-37 in various tRNAs. The sequence is that of tRNA (guanine-N(1)-)-methyltransferase from Brucella abortus (strain S19).